The primary structure comprises 293 residues: uncharacterized protein (293 aa).

Belongs to the TolB family.

This is an uncharacterized protein from Agrobacterium fabrum (strain C58 / ATCC 33970) (Agrobacterium tumefaciens (strain C58)).